Reading from the N-terminus, the 197-residue chain is 3-isopropylmalate dehydratase small subunit (197 aa).

It belongs to the LeuD family. LeuD type 1 subfamily. In terms of assembly, heterodimer of LeuC and LeuD.

It carries out the reaction (2R,3S)-3-isopropylmalate = (2S)-2-isopropylmalate. The protein operates within amino-acid biosynthesis; L-leucine biosynthesis; L-leucine from 3-methyl-2-oxobutanoate: step 2/4. In terms of biological role, catalyzes the isomerization between 2-isopropylmalate and 3-isopropylmalate, via the formation of 2-isopropylmaleate. This is 3-isopropylmalate dehydratase small subunit from Geobacillus sp. (strain WCH70).